Here is a 271-residue protein sequence, read N- to C-terminus: Mannosyl-3-phosphoglycerate phosphatase (271 aa).

Aspartate 13 serves as the catalytic Nucleophile. Residues aspartate 13, aspartate 15, and aspartate 214 each contribute to the Mg(2+) site.

Belongs to the HAD-like hydrolase superfamily. MPGP family. Requires Mg(2+) as cofactor.

It localises to the cytoplasm. It carries out the reaction 2-O-(alpha-D-mannosyl)-3-phosphoglycerate + H2O = (2R)-2-O-(alpha-D-mannosyl)-glycerate + phosphate. In Escherichia coli (strain 55989 / EAEC), this protein is Mannosyl-3-phosphoglycerate phosphatase.